The sequence spans 1040 residues: Multidrug resistance protein MdtB (1040 aa).

Transmembrane regions (helical) follow at residues 16–36, 347–367, 369–389, 396–416, 440–460, 472–492, 537–557, 863–883, 888–908, 911–931, 968–988, and 998–1018; these read FIMRPVATTLLMVAILLAGII, LMMAIALVVMIIYLFLRNIPA, IIPGVAVPLSLIGTFAVMVFL, LTLMALTIATGFVVDDAIVVI, IGFTIISLTFSLIAVLIPLLF, FAITLAVAILISAVVSLTLTP, WLTLSVALSTLLLSVLLWVFI, LGSTVWLIVAAVVAMYIVLGI, FIHPITILSTLPTAGVGALLA, IAGSELDVIAIIGIILLIGIV, ILMTTLAALLGALPLMLSTGV, and IGMVGGLIVSQVLTLFTTPVI.

It belongs to the resistance-nodulation-cell division (RND) (TC 2.A.6) family. MdtB subfamily. Part of a tripartite efflux system composed of MdtA, MdtB and MdtC. MdtB forms a heteromultimer with MdtC.

The protein resides in the cell inner membrane. Functionally, the MdtABC tripartite complex confers resistance against novobiocin and deoxycholate. This Escherichia coli (strain K12 / MC4100 / BW2952) protein is Multidrug resistance protein MdtB.